An 81-amino-acid polypeptide reads, in one-letter code: Three-finger toxin MALT0051C (81 aa).

Residues 1–21 (MKTLLLTLVVVTVVCLDFGHT) form the signal peptide. 4 disulfides stabilise this stretch: cysteine 24–cysteine 43, cysteine 38–cysteine 60, cysteine 62–cysteine 73, and cysteine 74–cysteine 79.

This sequence belongs to the three-finger toxin family. Short-chain subfamily. Type I alpha-neurotoxin sub-subfamily. In terms of tissue distribution, expressed by the venom gland.

The protein resides in the secreted. Functionally, binds to muscle nicotinic acetylcholine receptor (nAChR) and inhibit acetylcholine from binding to the receptor, thereby impairing neuromuscular transmission. The sequence is that of Three-finger toxin MALT0051C from Micrurus altirostris (Uruguayan coral snake).